Here is a 98-residue protein sequence, read N- to C-terminus: ESAT-6-like protein EsxM (98 aa).

Belongs to the WXG100 family. CFP-10 subfamily.

It is found in the secreted. This Mycobacterium bovis (strain ATCC BAA-935 / AF2122/97) protein is ESAT-6-like protein EsxM (esxM).